Here is a 397-residue protein sequence, read N- to C-terminus: 8-amino-7-oxononanoate synthase (397 aa).

Position 21 (arginine 21) interacts with substrate. 110 to 111 (GY) provides a ligand contact to pyridoxal 5'-phosphate. Residue histidine 135 coordinates substrate. The pyridoxal 5'-phosphate site is built by serine 181, histidine 209, and threonine 238. Lysine 241 is subject to N6-(pyridoxal phosphate)lysine. A substrate-binding site is contributed by threonine 355.

Belongs to the class-II pyridoxal-phosphate-dependent aminotransferase family. BioF subfamily. Homodimer. Requires pyridoxal 5'-phosphate as cofactor.

The enzyme catalyses 6-carboxyhexanoyl-[ACP] + L-alanine + H(+) = (8S)-8-amino-7-oxononanoate + holo-[ACP] + CO2. It participates in cofactor biosynthesis; biotin biosynthesis. In terms of biological role, catalyzes the decarboxylative condensation of pimeloyl-[acyl-carrier protein] and L-alanine to produce 8-amino-7-oxononanoate (AON), [acyl-carrier protein], and carbon dioxide. This Saccharophagus degradans (strain 2-40 / ATCC 43961 / DSM 17024) protein is 8-amino-7-oxononanoate synthase.